A 763-amino-acid polypeptide reads, in one-letter code: Protein translocase subunit SecA 2 (763 aa).

ATP is bound by residues Q83, G101–T105, and D490.

The protein belongs to the SecA family. Monomer and homodimer. Part of the essential Sec protein translocation apparatus which comprises SecA, SecYEG and auxiliary proteins SecDF. Other proteins may also be involved.

Its subcellular location is the cell membrane. The protein localises to the cytoplasm. The catalysed reaction is ATP + H2O + cellular proteinSide 1 = ADP + phosphate + cellular proteinSide 2.. In terms of biological role, part of the Sec protein translocase complex. Interacts with the SecYEG preprotein conducting channel. Has a central role in coupling the hydrolysis of ATP to the transfer of proteins into and across the cell membrane, serving as an ATP-driven molecular motor driving the stepwise translocation of polypeptide chains across the membrane. The chain is Protein translocase subunit SecA 2 from Corynebacterium efficiens (strain DSM 44549 / YS-314 / AJ 12310 / JCM 11189 / NBRC 100395).